Consider the following 84-residue polypeptide: M-myrmeciitoxin-Mb2a (84 aa).

A signal peptide spans 1 to 21; that stretch reads MKLSCLLLTLAIIFVLTIVHA. Residues 22–48 constitute a propeptide that is removed on maturation; it reads PNVKAKALADPESDAVGFADAVGEADP.

The protein belongs to the formicidae venom precursor-01 superfamily. Ant pilosulin family. Expressed by the venom gland.

It is found in the secreted. In terms of biological role, shows activity against E.coli and S.aureus (MIC&lt;6.25 uM), moderate activity against P.aeruginosa (MIC&lt;25 uM), weak activity against B.subtilis (MIC&lt;50 uM), and has no effect against L.garvieae, C.albicans, and S.cerevisiae. Has no hemolytic nor cytolytic activity. Causes an IgE-independent histamine release. The protein is M-myrmeciitoxin-Mb2a of Myrmecia banksi (Jack jumper ant).